The sequence spans 338 residues: uncharacterized protein (338 aa).

Positions 1-29 are cleaved as a signal peptide; sequence MIKQLYKNITICTLALSTTFTVLPATSYA.

The protein belongs to the aerolysin family.

This is an uncharacterized protein from Staphylococcus aureus (strain MSSA476).